Consider the following 156-residue polypeptide: Small ribosomal subunit protein uS7 (156 aa).

Belongs to the universal ribosomal protein uS7 family. Part of the 30S ribosomal subunit. Contacts proteins S9 and S11.

Its function is as follows. One of the primary rRNA binding proteins, it binds directly to 16S rRNA where it nucleates assembly of the head domain of the 30S subunit. Is located at the subunit interface close to the decoding center, probably blocks exit of the E-site tRNA. The protein is Small ribosomal subunit protein uS7 of Micrococcus luteus (strain ATCC 4698 / DSM 20030 / JCM 1464 / CCM 169 / CCUG 5858 / IAM 1056 / NBRC 3333 / NCIMB 9278 / NCTC 2665 / VKM Ac-2230) (Micrococcus lysodeikticus).